The following is a 186-amino-acid chain: Der GTPase-activating protein YihI (186 aa).

The disordered stretch occupies residues 1–65; it reads MARTKKTRRI…AGSRHSAVDT (65 aa). Composition is skewed to basic and acidic residues over residues 9-25 and 34-45; these read RITDIMPMRKTDKRPEN and TRYELDAKSREE.

Belongs to the YihI family. As to quaternary structure, interacts with Der.

Its function is as follows. A GTPase-activating protein (GAP) that modifies Der/EngA GTPase function. May play a role in ribosome biogenesis. The polypeptide is Der GTPase-activating protein YihI (Histophilus somni (strain 129Pt) (Haemophilus somnus)).